The primary structure comprises 122 residues: Aspartate 1-decarboxylase (122 aa).

Catalysis depends on serine 25, which acts as the Schiff-base intermediate with substrate; via pyruvic acid. At serine 25 the chain carries Pyruvic acid (Ser). Threonine 57 lines the substrate pocket. Tyrosine 58 functions as the Proton donor in the catalytic mechanism. 73–75 (GAA) contacts substrate.

Belongs to the PanD family. As to quaternary structure, heterooctamer of four alpha and four beta subunits. It depends on pyruvate as a cofactor. In terms of processing, is synthesized initially as an inactive proenzyme, which is activated by self-cleavage at a specific serine bond to produce a beta-subunit with a hydroxyl group at its C-terminus and an alpha-subunit with a pyruvoyl group at its N-terminus.

The protein resides in the cytoplasm. The enzyme catalyses L-aspartate + H(+) = beta-alanine + CO2. Its pathway is cofactor biosynthesis; (R)-pantothenate biosynthesis; beta-alanine from L-aspartate: step 1/1. Catalyzes the pyruvoyl-dependent decarboxylation of aspartate to produce beta-alanine. The polypeptide is Aspartate 1-decarboxylase (Bordetella parapertussis (strain 12822 / ATCC BAA-587 / NCTC 13253)).